The following is a 620-amino-acid chain: Rhamnogalacturonan endolyase YesW (620 aa).

A signal peptide spans 1–37 (MRRSCLMIRRRKRMFTAVTLLVLLVMGTSVCPVKAEG). The tract at residues 133-152 (LDKPAGGTTPKGESYTYSAN) is disordered. Asparagine 152 serves as a coordination point for substrate. Aspartate 153, aspartate 158, aspartate 160, aspartate 162, glutamine 164, and glutamate 166 together coordinate Ca(2+). Aspartate 172 serves as a coordination point for substrate. The a carbohydrate site is built by aspartate 187 and lysine 207. Positions 222, 224, 226, 228, and 230 each coordinate Ca(2+). A carbohydrate-binding residues include glycine 238 and arginine 255. Ca(2+) is bound by residues histidine 363, aspartate 369, aspartate 371, aspartate 373, lysine 375, glutamate 377, aspartate 386, histidine 387, histidine 399, aspartate 401, aspartate 407, aspartate 409, arginine 412, glycine 414, glutamate 416, and glutamate 422. Substrate is bound at residue arginine 452. Residues aspartate 457, aspartate 459, tyrosine 462, glycine 464, glutamate 466, aspartate 496, aspartate 498, leucine 500, and glutamate 502 each coordinate Ca(2+). Residue 532 to 534 (NGT) coordinates substrate. Positions 543, 545, 547, 549, 551, 592, and 594 each coordinate Ca(2+). Position 595 (tyrosine 595) interacts with substrate. Asparagine 596 is a Ca(2+) binding site.

This sequence belongs to the polysaccharide lyase 11 family. As to quaternary structure, monomer. Requires Ca(2+) as cofactor. It depends on Mn(2+) as a cofactor.

It localises to the secreted. It catalyses the reaction Endotype eliminative cleavage of L-alpha-rhamnopyranosyl-(1-&gt;4)-alpha-D-galactopyranosyluronic acid bonds of rhamnogalacturonan I domains in ramified hairy regions of pectin leaving L-rhamnopyranose at the reducing end and 4-deoxy-4,5-unsaturated D-galactopyranosyluronic acid at the non-reducing end.. Its function is as follows. Pectinolytic enzyme that degrades type I rhamnogalacturonan from plant cell walls and releases oligosaccharide products. Degrades rhamnogalacturonan, polygalacturonic acid, pectic acid and pectin. The protein is Rhamnogalacturonan endolyase YesW (yesW) of Bacillus subtilis (strain 168).